A 184-amino-acid chain; its full sequence is Ribosome-recycling factor (184 aa).

This sequence belongs to the RRF family.

The protein resides in the cytoplasm. Its function is as follows. Responsible for the release of ribosomes from messenger RNA at the termination of protein biosynthesis. May increase the efficiency of translation by recycling ribosomes from one round of translation to another. In Leptospira interrogans serogroup Icterohaemorrhagiae serovar copenhageni (strain Fiocruz L1-130), this protein is Ribosome-recycling factor.